The sequence spans 471 residues: Putative ETHYLENE INSENSITIVE 3-like 4 protein (471 aa).

Residues 280-316 (DLKISEDQDDQESSGSKRKSESMEPSKSVYTCQNSSC) are disordered. Over residues 304–316 (PSKSVYTCQNSSC) the composition is skewed to polar residues.

This sequence belongs to the EIN3 family.

It is found in the nucleus. Functionally, putative transcription factor that may be involved in the ethylene response pathway. This is Putative ETHYLENE INSENSITIVE 3-like 4 protein (EIL4) from Arabidopsis thaliana (Mouse-ear cress).